A 444-amino-acid polypeptide reads, in one-letter code: Ribosomal protein uS12 methylthiotransferase RimO (444 aa).

One can recognise an MTTase N-terminal domain in the interval 2 to 118 (PSIGLLSLGC…IVEVVNHALE (117 aa)). 6 residues coordinate [4Fe-4S] cluster: C11, C47, C81, C156, C160, and C163. Residues 142–372 (STPSYTAYVK…MKLQREISLS (231 aa)) form the Radical SAM core domain. Residues 375-444 (QKRIGQEIEV…EYDLMGELAQ (70 aa)) form the TRAM domain.

This sequence belongs to the methylthiotransferase family. RimO subfamily. [4Fe-4S] cluster is required as a cofactor.

It localises to the cytoplasm. The enzyme catalyses L-aspartate(89)-[ribosomal protein uS12]-hydrogen + (sulfur carrier)-SH + AH2 + 2 S-adenosyl-L-methionine = 3-methylsulfanyl-L-aspartate(89)-[ribosomal protein uS12]-hydrogen + (sulfur carrier)-H + 5'-deoxyadenosine + L-methionine + A + S-adenosyl-L-homocysteine + 2 H(+). Catalyzes the methylthiolation of an aspartic acid residue of ribosomal protein uS12. In Desulforamulus reducens (strain ATCC BAA-1160 / DSM 100696 / MI-1) (Desulfotomaculum reducens), this protein is Ribosomal protein uS12 methylthiotransferase RimO.